The sequence spans 653 residues: Beta-galactosidase (653 aa).

Residues 1–22 form the signal peptide; it reads MPGVVRLLALLLVPLLLGSARG. Residues 23–27 constitute a propeptide that is removed on maturation; it reads LHNAT. An N-linked (GlcNAc...) asparagine glycan is attached at Asn25. Residue Tyr82 participates in substrate binding. Asn96 is a glycosylation site (N-linked (GlcNAc...) asparagine). Positions 128 and 186 each coordinate substrate. Glu187 (proton donor) is an active-site residue. The cysteines at positions 194 and 229 are disulfide-linked. N-linked (GlcNAc...) asparagine glycosylation occurs at Asn246. The active-site Nucleophile is Glu267. Tyr332 serves as a coordination point for substrate. 3 N-linked (GlcNAc...) asparagine glycosylation sites follow: Asn463, Asn497, and Asn554. Cys625 and Cys633 are joined by a disulfide.

It belongs to the glycosyl hydrolase 35 family. In terms of assembly, homodimer. May form higher multimers.

The protein resides in the lysosome. The catalysed reaction is Hydrolysis of terminal non-reducing beta-D-galactose residues in beta-D-galactosides.. Its function is as follows. Cleaves beta-linked terminal galactosyl residues from gangliosides, glycoproteins, and glycosaminoglycans. This chain is Beta-galactosidase (GLB1), found in Bos taurus (Bovine).